A 721-amino-acid polypeptide reads, in one-letter code: DNA ligase (721 aa).

NAD(+) contacts are provided by residues aspartate 42–aspartate 46, serine 91–leucine 92, and glutamate 125. Lysine 127 (N6-AMP-lysine intermediate) is an active-site residue. Arginine 148, glutamate 184, lysine 300, and lysine 324 together coordinate NAD(+). Zn(2+)-binding residues include cysteine 430, cysteine 433, cysteine 448, and cysteine 454. The BRCT domain maps to serine 642–glutamate 721.

The protein belongs to the NAD-dependent DNA ligase family. LigA subfamily. Requires Mg(2+) as cofactor. Mn(2+) is required as a cofactor.

The enzyme catalyses NAD(+) + (deoxyribonucleotide)n-3'-hydroxyl + 5'-phospho-(deoxyribonucleotide)m = (deoxyribonucleotide)n+m + AMP + beta-nicotinamide D-nucleotide.. Functionally, DNA ligase that catalyzes the formation of phosphodiester linkages between 5'-phosphoryl and 3'-hydroxyl groups in double-stranded DNA using NAD as a coenzyme and as the energy source for the reaction. It is essential for DNA replication and repair of damaged DNA. The sequence is that of DNA ligase from Brucella anthropi (strain ATCC 49188 / DSM 6882 / CCUG 24695 / JCM 21032 / LMG 3331 / NBRC 15819 / NCTC 12168 / Alc 37) (Ochrobactrum anthropi).